Reading from the N-terminus, the 366-residue chain is Chorismate synthase (366 aa).

Position 48 (R48) interacts with NADP(+). Residues 125 to 127, G283, 298 to 302, and R324 each bind FMN; these read RSS and KPTPS.

Belongs to the chorismate synthase family. Homotetramer. The cofactor is FMNH2.

It catalyses the reaction 5-O-(1-carboxyvinyl)-3-phosphoshikimate = chorismate + phosphate. The protein operates within metabolic intermediate biosynthesis; chorismate biosynthesis; chorismate from D-erythrose 4-phosphate and phosphoenolpyruvate: step 7/7. Functionally, catalyzes the anti-1,4-elimination of the C-3 phosphate and the C-6 proR hydrogen from 5-enolpyruvylshikimate-3-phosphate (EPSP) to yield chorismate, which is the branch point compound that serves as the starting substrate for the three terminal pathways of aromatic amino acid biosynthesis. This reaction introduces a second double bond into the aromatic ring system. In Lachnospira eligens (strain ATCC 27750 / DSM 3376 / VPI C15-48 / C15-B4) (Eubacterium eligens), this protein is Chorismate synthase.